The following is a 529-amino-acid chain: Glucose-6-phosphate isomerase (529 aa).

The active-site Proton donor is the Glu-322. Active-site residues include His-351 and Lys-455.

The protein belongs to the GPI family.

Its subcellular location is the cytoplasm. It carries out the reaction alpha-D-glucose 6-phosphate = beta-D-fructose 6-phosphate. Its pathway is carbohydrate biosynthesis; gluconeogenesis. It functions in the pathway carbohydrate degradation; glycolysis; D-glyceraldehyde 3-phosphate and glycerone phosphate from D-glucose: step 2/4. Functionally, catalyzes the reversible isomerization of glucose-6-phosphate to fructose-6-phosphate. The protein is Glucose-6-phosphate isomerase of Cyanothece sp. (strain PCC 7425 / ATCC 29141).